Here is a 223-residue protein sequence, read N- to C-terminus: Voltage-dependent calcium channel gamma-1 subunit (223 aa).

At 1–10 the chain is on the cytoplasmic side; that stretch reads MSQTKTAKVR. Residues 11 to 29 form a helical membrane-spanning segment; that stretch reads VTLFFILVGGVLAMVAVVT. Residues 30-109 lie on the Extracellular side of the membrane; sequence DHWAVLSPHL…TQKEYSISAA (80 aa). Asn-43 and Asn-80 each carry an N-linked (GlcNAc...) asparagine glycan. A disulfide bond links Cys-57 and Cys-81. A helical transmembrane segment spans residues 110–130; sequence AIAIFSLGFIIVGSICAFLSF. Topologically, residues 131 to 135 are cytoplasmic; the sequence is GNKRD. The chain crosses the membrane as a helical span at residues 136-156; that stretch reads YLLRPASMFYAFAGLCLIVSV. The Extracellular segment spans residues 157-180; that stretch reads EVMRQSVKRMIDSEDTVWIEHYYS. The helical transmembrane segment at 181–205 threads the bilayer; it reads WSFACACAAFILLFLGGLFLLLFSL. Residues 206–223 are Cytoplasmic-facing; that stretch reads PRMPQNPWESCMDAEPEH.

Belongs to the PMP-22/EMP/MP20 family. CACNG subfamily. In terms of assembly, component of a calcium channel complex consisting of a pore-forming alpha subunit (CACNA1S) and the ancillary subunits CACNB1 or CACNB2, CACNG1 and CACNA2D1. The channel complex contains alpha, beta, gamma and delta subunits in a 1:1:1:1 ratio, i.e. it contains either CACNB1 or CACNB2. Post-translationally, N-glycosylated. In terms of tissue distribution, detected in skeletal muscle (at protein level).

It localises to the cell membrane. The protein resides in the sarcolemma. Functionally, regulatory subunit of the voltage-gated calcium channel that gives rise to L-type calcium currents in skeletal muscle. Regulates channel inactivation kinetics. In Mus musculus (Mouse), this protein is Voltage-dependent calcium channel gamma-1 subunit (Cacng1).